A 469-amino-acid polypeptide reads, in one-letter code: Glutamate--tRNA ligase (469 aa).

Positions 9 to 19 match the 'HIGH' region motif; that stretch reads PSPTGFLHVGG. The Zn(2+) site is built by Cys98, Cys100, Cys125, and Asp127. The 'KMSKS' region motif lies at 236–240; it reads KLSKR. Lys239 serves as a coordination point for ATP.

The protein belongs to the class-I aminoacyl-tRNA synthetase family. Glutamate--tRNA ligase type 1 subfamily. As to quaternary structure, monomer. The cofactor is Zn(2+).

It localises to the cytoplasm. The enzyme catalyses tRNA(Glu) + L-glutamate + ATP = L-glutamyl-tRNA(Glu) + AMP + diphosphate. In terms of biological role, catalyzes the attachment of glutamate to tRNA(Glu) in a two-step reaction: glutamate is first activated by ATP to form Glu-AMP and then transferred to the acceptor end of tRNA(Glu). The polypeptide is Glutamate--tRNA ligase (Shewanella putrefaciens (strain CN-32 / ATCC BAA-453)).